The sequence spans 606 residues: Glutamine--fructose-6-phosphate aminotransferase [isomerizing] (606 aa).

Cys2 (nucleophile; for GATase activity) is an active-site residue. The Glutamine amidotransferase type-2 domain occupies 2 to 218; sequence CGIFGYLGEK…SGELAVLRIG (217 aa). SIS domains are found at residues 278 to 424 and 448 to 596; these read FTES…HRQV and LDSS…VDRP. The For Fru-6P isomerization activity role is filled by Lys601.

Homodimer.

It is found in the cytoplasm. It catalyses the reaction D-fructose 6-phosphate + L-glutamine = D-glucosamine 6-phosphate + L-glutamate. Catalyzes the first step in hexosamine metabolism, converting fructose-6P into glucosamine-6P using glutamine as a nitrogen source. This chain is Glutamine--fructose-6-phosphate aminotransferase [isomerizing], found in Chlamydia trachomatis serovar D (strain ATCC VR-885 / DSM 19411 / UW-3/Cx).